Reading from the N-terminus, the 320-residue chain is tRNA pseudouridine synthase B (320 aa).

The active-site Nucleophile is D49.

It belongs to the pseudouridine synthase TruB family. Type 1 subfamily.

It catalyses the reaction uridine(55) in tRNA = pseudouridine(55) in tRNA. Functionally, responsible for synthesis of pseudouridine from uracil-55 in the psi GC loop of transfer RNAs. In Bartonella tribocorum (strain CIP 105476 / IBS 506), this protein is tRNA pseudouridine synthase B.